Here is a 103-residue protein sequence, read N- to C-terminus: Potassium voltage-gated channel subfamily E member 3 (103 aa).

N-linked (GlcNAc...) asparagine glycosylation is found at N5, N22, and N41. Residues 30-52 form a disordered region; it reads LCRPGPGPGPDNQTEDRRASLPG. A helical membrane pass occupies residues 57–77; that stretch reads SYMYILFVMFLFAVTVGSLIL. An interaction with KCNQ1 region spans residues 68-79; sequence FAVTVGSLILGY. At 78–103 the chain is on the cytoplasmic side; it reads GYTRSRKVDKRSDPYHVYIKNRVSMI.

Belongs to the potassium channel KCNE family. Interacts with KCNB1. Interacts with KCNC2. Associates with KCNC4/Kv3.4. Interacts with KCNQ1; associates with a KCNQ1:KCNE3 stoichiometry of 4:4; produces a current with nearly instantaneous activation with a linear current-voltage relationship and alters membrane raft localization; affects KCNQ1 structure and gating properties.

It is found in the cell membrane. Its subcellular location is the cytoplasm. It localises to the perikaryon. The protein resides in the cell projection. The protein localises to the dendrite. It is found in the membrane raft. Ancillary protein that functions as a regulatory subunit of the voltage-gated potassium (Kv) channel complex composed of pore-forming and potassium-conducting alpha subunits and of regulatory beta subunits. KCNE3 beta subunit modulates the gating kinetics and enhances stability of the channel complex. Alters the gating of the delayed rectifier Kv channel containing KCNB1 alpha subunit. Associates with KCNC4/Kv3.4 alpha subunit to form the subthreshold Kv channel in skeletal muscle and to establish the resting membrane potential (RMP) in muscle cells. Association with KCNQ1/KCLQT1 alpha subunit may form the intestinal cAMP-stimulated potassium channel involved in chloride secretion that produces a current with nearly instantaneous activation with a linear current-voltage relationship. The chain is Potassium voltage-gated channel subfamily E member 3 from Mus musculus (Mouse).